The following is a 735-amino-acid chain: Tripartite terminase subunit 3 (735 aa).

The short motif at 183-189 is the Nuclear localization signal element; that stretch reads PKKRAKV. Residues 258–265 carry the Walker A motif motif; that stretch reads VPRRHGKT. The short motif at 352 to 357 is the Walker B motif element; it reads LLFVDE. E357 functions as the For ATPase activity in the catalytic mechanism. Residues D509, E581, and D707 each act as for nuclease activity in the active site.

This sequence belongs to the herpesviridae TRM3 protein family. As to quaternary structure, interacts with the terminase subunits TRM1 and TRM2. Interacts with portal protein.

Its subcellular location is the host nucleus. Component of the molecular motor that translocates viral genomic DNA in empty capsid during DNA packaging. Forms a tripartite terminase complex together with TRM1 and TRM2 in the host cytoplasm. Once the complex reaches the host nucleus, it interacts with the capsid portal vertex. This portal forms a ring in which genomic DNA is translocated into the capsid. TRM3 carries an RNase H-like nuclease activity that plays an important role for the cleavage of concatemeric viral DNA into unit length genomes. This Homo sapiens (Human) protein is Tripartite terminase subunit 3.